Consider the following 232-residue polypeptide: Phosphatidylserine decarboxylase proenzyme (232 aa).

Serine 201 (schiff-base intermediate with substrate; via pyruvic acid) is an active-site residue. Serine 201 is subject to Pyruvic acid (Ser); by autocatalysis.

Belongs to the phosphatidylserine decarboxylase family. PSD-A subfamily. As to quaternary structure, heterodimer of a large membrane-associated beta subunit and a small pyruvoyl-containing alpha subunit. The cofactor is pyruvate. Post-translationally, is synthesized initially as an inactive proenzyme. Formation of the active enzyme involves a self-maturation process in which the active site pyruvoyl group is generated from an internal serine residue via an autocatalytic post-translational modification. Two non-identical subunits are generated from the proenzyme in this reaction, and the pyruvate is formed at the N-terminus of the alpha chain, which is derived from the carboxyl end of the proenzyme. The post-translation cleavage follows an unusual pathway, termed non-hydrolytic serinolysis, in which the side chain hydroxyl group of the serine supplies its oxygen atom to form the C-terminus of the beta chain, while the remainder of the serine residue undergoes an oxidative deamination to produce ammonia and the pyruvoyl prosthetic group on the alpha chain.

It localises to the cell membrane. The enzyme catalyses a 1,2-diacyl-sn-glycero-3-phospho-L-serine + H(+) = a 1,2-diacyl-sn-glycero-3-phosphoethanolamine + CO2. It participates in phospholipid metabolism; phosphatidylethanolamine biosynthesis; phosphatidylethanolamine from CDP-diacylglycerol: step 2/2. In terms of biological role, catalyzes the formation of phosphatidylethanolamine (PtdEtn) from phosphatidylserine (PtdSer). The polypeptide is Phosphatidylserine decarboxylase proenzyme (Mycolicibacterium smegmatis (strain ATCC 700084 / mc(2)155) (Mycobacterium smegmatis)).